Here is a 1228-residue protein sequence, read N- to C-terminus: DNA-directed RNA polymerase subunit beta'' (1228 aa).

Zn(2+) is bound by residues Cys-222, Cys-296, Cys-303, and Cys-306.

Belongs to the RNA polymerase beta' chain family. RpoC2 subfamily. As to quaternary structure, in plastids the minimal PEP RNA polymerase catalytic core is composed of four subunits: alpha, beta, beta', and beta''. When a (nuclear-encoded) sigma factor is associated with the core the holoenzyme is formed, which can initiate transcription. Requires Zn(2+) as cofactor.

The protein localises to the plastid. It localises to the chloroplast. The catalysed reaction is RNA(n) + a ribonucleoside 5'-triphosphate = RNA(n+1) + diphosphate. In terms of biological role, DNA-dependent RNA polymerase catalyzes the transcription of DNA into RNA using the four ribonucleoside triphosphates as substrates. The chain is DNA-directed RNA polymerase subunit beta'' from Gracilaria tenuistipitata var. liui (Red alga).